A 927-amino-acid chain; its full sequence is Translation initiation factor IF-2 (927 aa).

The disordered stretch occupies residues 27-337 (LGLPVKSHAS…GAPKPVTERK (311 aa)). Residues 49-69 (SFSSSKTKAPTNSVQTNQGVK) are compositionally biased toward polar residues. Basic and acidic residues-rich tracts occupy residues 70 to 86 (TESK…DDKP) and 101 to 138 (FKAE…DRRH). The segment covering 146-159 (GNRNDNRQGQQNNR) has biased composition (low complexity). Composition is skewed to basic and acidic residues over residues 160–171 (NKNDGRYADHKQ), 202–226 (YSRH…EQEL), and 234–257 (AQEE…KEIV). Positions 300–316 (NWNNQNQVRNQRNSNWN) are enriched in low complexity. One can recognise a tr-type G domain in the interval 428–597 (ERPPVVTIMG…LLVAEMEELK (170 aa)). The interval 437 to 444 (GHVDHGKT) is G1. A GTP-binding site is contributed by 437–444 (GHVDHGKT). The interval 462–466 (GITQH) is G2. The tract at residues 483–486 (DTPG) is G3. GTP contacts are provided by residues 483 to 487 (DTPGH) and 537 to 540 (NKID). The G4 stretch occupies residues 537–540 (NKID). The segment at 573 to 575 (SAK) is G5.

This sequence belongs to the TRAFAC class translation factor GTPase superfamily. Classic translation factor GTPase family. IF-2 subfamily.

It is found in the cytoplasm. Functionally, one of the essential components for the initiation of protein synthesis. Protects formylmethionyl-tRNA from spontaneous hydrolysis and promotes its binding to the 30S ribosomal subunits. Also involved in the hydrolysis of GTP during the formation of the 70S ribosomal complex. The polypeptide is Translation initiation factor IF-2 (Streptococcus agalactiae serotype V (strain ATCC BAA-611 / 2603 V/R)).